Here is a 220-residue protein sequence, read N- to C-terminus: 7-cyano-7-deazaguanine synthase (220 aa).

10 to 20 (FSGGQDSTTCL) contacts ATP. Cys-186, Cys-195, Cys-198, and Cys-201 together coordinate Zn(2+).

It belongs to the QueC family. Homodimer. Zn(2+) is required as a cofactor.

It carries out the reaction 7-carboxy-7-deazaguanine + NH4(+) + ATP = 7-cyano-7-deazaguanine + ADP + phosphate + H2O + H(+). The protein operates within purine metabolism; 7-cyano-7-deazaguanine biosynthesis. Catalyzes the ATP-dependent conversion of 7-carboxy-7-deazaguanine (CDG) to 7-cyano-7-deazaguanine (preQ(0)). The sequence is that of 7-cyano-7-deazaguanine synthase from Bacillus cereus (strain AH187).